The primary structure comprises 413 residues: Serine/threonine-protein kinase SSN3 (413 aa).

One can recognise a Protein kinase domain in the interval 26-355 (YHIVGFISSG…AQEALEHPYF (330 aa)). Residues 32-40 (ISSGTYGRV) and Lys-56 each bind ATP. Asp-158 functions as the Proton acceptor in the catalytic mechanism. Basic and acidic residues predominate over residues 376–385 (RRVTQDDNDI). The disordered stretch occupies residues 376–413 (RRVTQDDNDIRSGSLPGTKRSGLPDDSLMGRASKRLKE).

This sequence belongs to the protein kinase superfamily. CMGC Ser/Thr protein kinase family. CDC2/CDKX subfamily. Component of the srb8-11 complex, a regulatory module of the Mediator complex. Mg(2+) is required as a cofactor.

The protein resides in the nucleus. It carries out the reaction L-seryl-[protein] + ATP = O-phospho-L-seryl-[protein] + ADP + H(+). It catalyses the reaction L-threonyl-[protein] + ATP = O-phospho-L-threonyl-[protein] + ADP + H(+). The enzyme catalyses [DNA-directed RNA polymerase] + ATP = phospho-[DNA-directed RNA polymerase] + ADP + H(+). Its function is as follows. Component of the srb8-11 complex. The srb8-11 complex is a regulatory module of the Mediator complex which is itself involved in regulation of basal and activated RNA polymerase II-dependent transcription. The srb8-11 complex may be involved in the transcriptional repression of a subset of genes regulated by Mediator. It may inhibit the association of the Mediator complex with RNA polymerase II to form the holoenzyme complex. The srb8-11 complex phosphorylates the C-terminal domain (CTD) of the largest subunit of RNA polymerase II. The chain is Serine/threonine-protein kinase SSN3 (ssn3) from Aspergillus oryzae (strain ATCC 42149 / RIB 40) (Yellow koji mold).